Reading from the N-terminus, the 367-residue chain is Glutamate 5-kinase (367 aa).

Residue lysine 10 participates in ATP binding. 3 residues coordinate substrate: serine 50, aspartate 137, and asparagine 149. Residues 169 to 170 and 211 to 217 contribute to the ATP site; these read TD and TGGMGTK. One can recognise a PUA domain in the interval 275–353; that stretch reads AGELTVDAGA…QQIDAILGYE (79 aa).

Belongs to the glutamate 5-kinase family.

It localises to the cytoplasm. The catalysed reaction is L-glutamate + ATP = L-glutamyl 5-phosphate + ADP. It functions in the pathway amino-acid biosynthesis; L-proline biosynthesis; L-glutamate 5-semialdehyde from L-glutamate: step 1/2. Functionally, catalyzes the transfer of a phosphate group to glutamate to form L-glutamate 5-phosphate. This chain is Glutamate 5-kinase, found in Klebsiella pneumoniae (strain 342).